The primary structure comprises 348 residues: Probable dual-specificity RNA methyltransferase RlmN (348 aa).

Glutamate 95 serves as the catalytic Proton acceptor. The region spanning 101–335 (SGNRLTICVS…VSLRASRGLD (235 aa)) is the Radical SAM core domain. Cysteine 108 and cysteine 340 are oxidised to a cystine. [4Fe-4S] cluster-binding residues include cysteine 115, cysteine 119, and cysteine 122. S-adenosyl-L-methionine is bound by residues 162–163 (GE), serine 192, 221–223 (SLH), and asparagine 297. Catalysis depends on cysteine 340, which acts as the S-methylcysteine intermediate.

Belongs to the radical SAM superfamily. RlmN family. The cofactor is [4Fe-4S] cluster.

Its subcellular location is the cytoplasm. It carries out the reaction adenosine(2503) in 23S rRNA + 2 reduced [2Fe-2S]-[ferredoxin] + 2 S-adenosyl-L-methionine = 2-methyladenosine(2503) in 23S rRNA + 5'-deoxyadenosine + L-methionine + 2 oxidized [2Fe-2S]-[ferredoxin] + S-adenosyl-L-homocysteine. The catalysed reaction is adenosine(37) in tRNA + 2 reduced [2Fe-2S]-[ferredoxin] + 2 S-adenosyl-L-methionine = 2-methyladenosine(37) in tRNA + 5'-deoxyadenosine + L-methionine + 2 oxidized [2Fe-2S]-[ferredoxin] + S-adenosyl-L-homocysteine. Specifically methylates position 2 of adenine 2503 in 23S rRNA and position 2 of adenine 37 in tRNAs. The chain is Probable dual-specificity RNA methyltransferase RlmN from Prochlorococcus marinus (strain SARG / CCMP1375 / SS120).